Reading from the N-terminus, the 207-residue chain is MGMLEARELLCERDERTLFSGLSFTLNAGEWVQITGSNGAGKTTLLRLLTGLSRPDAGDVLWQGQPLHQVRDSYHQNLLWIGHQPGIKTRLTALENLHFYHRDGDTAQCLEALAQAGLAGFEDIPVNQLSAGQQRRVALARLWLTRATLWILDEPFTAIDVNGVDRLTQRMAQHTEQGGIVILTTHQPLNVAESKIRRISLTQTGAA.

Residues L4 to A207 form the ABC transporter domain. G36–T43 provides a ligand contact to ATP.

Belongs to the ABC transporter superfamily. CcmA exporter (TC 3.A.1.107) family. The complex is composed of two ATP-binding proteins (CcmA) and two transmembrane proteins (CcmB).

The protein localises to the cell inner membrane. It catalyses the reaction heme b(in) + ATP + H2O = heme b(out) + ADP + phosphate + H(+). Its function is as follows. Part of the ABC transporter complex CcmAB involved in the biogenesis of c-type cytochromes; once thought to export heme, this seems not to be the case, but its exact role is uncertain. Responsible for energy coupling to the transport system. The sequence is that of Cytochrome c biogenesis ATP-binding export protein CcmA from Escherichia coli O6:H1 (strain CFT073 / ATCC 700928 / UPEC).